Consider the following 298-residue polypeptide: MSSVSELGYLGMSVTDLDAWRAYAAEVAGMEVVDEGESDRIYLRMDLWHHRIALIKGDTDDLAYMGWRLGDPTEFESMVEKLTNAGIAVTVASDAEARERRVLGLAKLTDPGGNPTEIFYGPQVDAHKPFHPGRPMFGKFVTGSEGIGHCILRQDDVEAAAAFYRLLGLRGSVEYQLHLPNGMVAMPYFMHCNERQHSVAFGLGPMEKRINHLMFEYTELDDLGLAHDIVRERQIDVALQLGKHANDLALTFYCANPSGWLWEFGWGARKAPAQQEFYTRDIFGHGNEAQGYGMDVPL.

VOC domains are found at residues 6–121 (ELGY…IFYG) and 146–267 (GIGH…FGWG). A Fe cation-binding site is contributed by H149. Substrate contacts are provided by residues H149, 196–197 (QH), H212, and Y253. H212 serves as a coordination point for Fe cation. Fe cation is bound at residue E263.

It belongs to the extradiol ring-cleavage dioxygenase family. In terms of assembly, homooctamer. It depends on Fe(2+) as a cofactor.

The catalysed reaction is naphthalene-1,2-diol + O2 = 2-hydroxychromene-2-carboxylate + H(+). It participates in aromatic compound metabolism; naphthalene degradation. Involved in the naphthalene and naphthalenesulfonate catabolic pathway. Catalyzes the meta-cleavage of 1,2-dihydroxynaphthalene (1,2-DHN) to yield 2-hydroxychromene-2-carboxylic acid. Can also cleave 1,2,5-trihydroxynaphthalene (1,2,5-THN), 1,2,6-trihydroxynaphthalene (1,2,6-THN), 1,2,7-trihydroxynaphthalene (1,2,7-THN), 2,3-dihydroxybiphenyl, 3,4-dihydroxybiphenyl, catechol, 3-methylcatechol and 4-methylcatechol. The chain is 1,2-dihydroxynaphthalene dioxygenase (nsaC) from Sphingobium xenophagum.